Here is a 201-residue protein sequence, read N- to C-terminus: Sterile alpha motif domain-containing protein 12 (201 aa).

Residues 77 to 143 (WTQQDVCKWL…LQQVLQLKVR (67 aa)) enclose the SAM domain.

The chain is Sterile alpha motif domain-containing protein 12 (SAMD12) from Pongo abelii (Sumatran orangutan).